A 320-amino-acid chain; its full sequence is Methionyl-tRNA formyltransferase (320 aa).

114–117 (SLLP) lines the (6S)-5,6,7,8-tetrahydrofolate pocket.

The protein belongs to the Fmt family.

It carries out the reaction L-methionyl-tRNA(fMet) + (6R)-10-formyltetrahydrofolate = N-formyl-L-methionyl-tRNA(fMet) + (6S)-5,6,7,8-tetrahydrofolate + H(+). Functionally, attaches a formyl group to the free amino group of methionyl-tRNA(fMet). The formyl group appears to play a dual role in the initiator identity of N-formylmethionyl-tRNA by promoting its recognition by IF2 and preventing the misappropriation of this tRNA by the elongation apparatus. The sequence is that of Methionyl-tRNA formyltransferase from Acinetobacter baumannii (strain AB0057).